A 243-amino-acid polypeptide reads, in one-letter code: Outer membrane protein A (243 aa).

The next 5 beta stranded transmembrane spans lie at 1–8, 13–21, 47–56, 61–68, and 87–95; these read LTAKLGYP, LDIYTRLGG, PVFAGGLEWA, IATRLEYQ, and LLSVGVSYR. 4 repeat units span residues 107–108, 109–110, 111–112, and 113–114. Positions 107–114 are 4 X 2 AA tandem repeats of A-P; it reads APAPAPAP. An OmpA-like domain is found at 116-243; sequence VQTKHFTLKS…RRVEIEVKGI (128 aa). Residues cysteine 217 and cysteine 229 are joined by a disulfide bond.

This sequence belongs to the outer membrane OOP (TC 1.B.6) superfamily. OmpA family. As to quaternary structure, monomer and homodimer.

It localises to the cell outer membrane. In terms of biological role, with TolR probably plays a role in maintaining the position of the peptidoglycan cell wall in the periplasm. Acts as a porin with low permeability that allows slow penetration of small solutes; an internal gate slows down solute passage. The polypeptide is Outer membrane protein A (Atlantibacter hermannii (Escherichia hermannii)).